Consider the following 85-residue polypeptide: Small ribosomal subunit protein bS16 (85 aa).

It belongs to the bacterial ribosomal protein bS16 family.

This is Small ribosomal subunit protein bS16 from Acinetobacter baylyi (strain ATCC 33305 / BD413 / ADP1).